A 461-amino-acid chain; its full sequence is Acetylcholine receptor subunit alpha (461 aa).

The signal sequence occupies residues Met1–Gly24. The Extracellular portion of the chain corresponds to Ser25–Ile234. Cystine bridges form between Cys152/Cys166 and Cys216/Cys217. Asn165 is a glycosylation site (N-linked (GlcNAc...) asparagine). 3 helical membrane-spanning segments follow: residues Pro235–Leu259, Met267–Val285, and Tyr301–Ile320. The Cytoplasmic segment spans residues Asn321 to His432. The helical transmembrane segment at Ile433–Ala451 threads the bilayer.

It belongs to the ligand-gated ion channel (TC 1.A.9) family. Acetylcholine receptor (TC 1.A.9.1) subfamily. Alpha-1/CHRNA1 sub-subfamily. Pentamer of two alpha chains, and one each of the beta, delta, and gamma chains.

The protein resides in the postsynaptic cell membrane. The protein localises to the cell membrane. It catalyses the reaction K(+)(in) = K(+)(out). It carries out the reaction Na(+)(in) = Na(+)(out). Functionally, upon acetylcholine binding, the AChR responds by an extensive change in conformation that affects all subunits and leads to opening of an ion-conducting channel across the plasma membrane. This is Acetylcholine receptor subunit alpha (CHRNA1) from Tetronarce californica (Pacific electric ray).